The sequence spans 100 residues: MISLFHGLFLSLILFILGLTSLIVRRNILFILISLEIMMNAVGLALIVVGSYWHQADGQIMYIFVITLAASEASIALALLLQLYRRKKTLNIDILSEMNG.

Helical transmembrane passes span 4–24, 28–48, and 60–80; these read LFHG…SLIV, ILFI…ALIV, and IMYI…LALL.

Belongs to the complex I subunit 4L family. NDH-1 is composed of 13 different subunits. Subunits NuoA, H, J, K, L, M, N constitute the membrane sector of the complex.

Its subcellular location is the cell membrane. It carries out the reaction a quinone + NADH + 5 H(+)(in) = a quinol + NAD(+) + 4 H(+)(out). Functionally, NDH-1 shuttles electrons from NADH, via FMN and iron-sulfur (Fe-S) centers, to quinones in the respiratory chain. The immediate electron acceptor for the enzyme in this species is believed to be ubiquinone. Couples the redox reaction to proton translocation (for every two electrons transferred, four hydrogen ions are translocated across the cytoplasmic membrane), and thus conserves the redox energy in a proton gradient. In Buchnera aphidicola subsp. Acyrthosiphon pisum (strain 5A), this protein is NADH-quinone oxidoreductase subunit K.